Reading from the N-terminus, the 380-residue chain is Cytochrome b (380 aa).

A run of 4 helical transmembrane segments spans residues 34–54 (FGSLLAVCLVTQILTGLLLAM), 78–99 (WLIRNLHANGASFFFICIFLHI), 114–134 (WNTGVILLLTLMATAFVGYVL), and 179–199 (FFALHFLLPFVIAGITIIHLT). Heme b-binding residues include His-84 and His-98. The heme b site is built by His-183 and His-197. His-202 lines the a ubiquinone pocket. Transmembrane regions (helical) follow at residues 227-247 (IKDILGLTLMFIPFLTLALFS), 289-309 (LGGVLALAASVLILLLIPFLH), 321-341 (LSQTLFWLLVANLLILTWIGS), and 348-368 (FIIIGQMASLSYFSILLILFP).

The protein belongs to the cytochrome b family. The cytochrome bc1 complex contains 11 subunits: 3 respiratory subunits (MT-CYB, CYC1 and UQCRFS1), 2 core proteins (UQCRC1 and UQCRC2) and 6 low-molecular weight proteins (UQCRH/QCR6, UQCRB/QCR7, UQCRQ/QCR8, UQCR10/QCR9, UQCR11/QCR10 and a cleavage product of UQCRFS1). This cytochrome bc1 complex then forms a dimer. It depends on heme b as a cofactor.

It is found in the mitochondrion inner membrane. Functionally, component of the ubiquinol-cytochrome c reductase complex (complex III or cytochrome b-c1 complex) that is part of the mitochondrial respiratory chain. The b-c1 complex mediates electron transfer from ubiquinol to cytochrome c. Contributes to the generation of a proton gradient across the mitochondrial membrane that is then used for ATP synthesis. The protein is Cytochrome b (MT-CYB) of Alectoris chukar (Chukar partridge).